Here is a 141-residue protein sequence, read N- to C-terminus: U1 small nuclear ribonucleoprotein C (141 aa).

The Matrin-type zinc-finger motif lies at 4-36 (YYCEYCDKYLTHDSPSVRKSHTIGKVHQQAVTL). A disordered region spans residues 69-141 (LLPPNMVPGQ…SNSPPSNNDQ (73 aa)). The segment covering 83–97 (MMPPGQFPFPPPPGQ) has biased composition (pro residues). 2 stretches are compositionally biased toward low complexity: residues 100–110 (GGMPPHQQQPM) and 124–141 (QQSA…NNDQ).

Belongs to the U1 small nuclear ribonucleoprotein C family. Component of the U1 snRNP. The U1 snRNP is composed of the U1 snRNA and the 7 core Sm proteins SNRPB, SNRPD1, SNRPD2, SNRPD3, SNRPE, SNRPF and SNRPG that assemble in a heptameric protein ring on the Sm site of the small nuclear RNA to form the core snRNP, and at least 3 U1 snRNP-specific proteins SNRNP70/U1-70K, SNRPA/U1-A and SNRPC/U1-C. SNRPC/U1-C interacts with U1 snRNA and the 5' splice-site region of the pre-mRNA.

It localises to the nucleus. In terms of biological role, component of the spliceosomal U1 snRNP, which is essential for recognition of the pre-mRNA 5' splice-site and the subsequent assembly of the spliceosome. SNRPC/U1-C is directly involved in initial 5' splice-site recognition for both constitutive and regulated alternative splicing. The interaction with the 5' splice-site seems to precede base-pairing between the pre-mRNA and the U1 snRNA. Stimulates commitment or early (E) complex formation by stabilizing the base pairing of the 5' end of the U1 snRNA and the 5' splice-site region. The polypeptide is U1 small nuclear ribonucleoprotein C (Heterostelium pallidum (strain ATCC 26659 / Pp 5 / PN500) (Cellular slime mold)).